Consider the following 397-residue polypeptide: MLSFLSARQSGLEDPLRLRRAQSTRRVLGLELNKDRDVERIHGSGVNTLDIEPVEGRYMLSGGSDGVVVLYDLENASRQPHYTCKAVCSVGRSHPDVHKYSVETVQWYPHDTGMFTSSSFDKTLKVWDTNTLQAADVFNFEETVYSHHMSPAATKHCLVAVGTRGPKVQLCDLKSGSCSHILQGHRQEILAVSWSPRHDYILATASADSRVKLWDVRRASGCLLTLDQHNGKKSQAAESANTAHNGKVNGLCFTSDGLHLLTIGTDNRMRLWNSSSGDNTLVNYGKVCNDSRKGLQFAVSCGCSSEFVFVPHGSTIAVYAVHSGERLAMLKGHYKSVDCCVFQPNFQELYSGSRDCNILAWVPPSYEPVPDDDDEAPAKSQLNPAFADAWSSSDEDG.

5 WD repeats span residues 41–81, 97–137, 184–224, 243–282, and 332–371; these read IHGS…RQPH, VHKY…AADV, GHRQ…GCLL, AHNG…NTLV, and GHYK…PVPD. Phosphoserine is present on residues Ser391, Ser392, and Ser393.

Part of the CSA complex (also named DCX(ERCC8) complex), a DCX E3 ubiquitin-protein ligase complex containing ERCC8, RBX1, DDB1 and CUL4A; the CSA complex interacts with RNA polymerase II; upon UV irradiation it interacts with the COP9 signalosome and preferentially with the hyperphosphorylated form of RNA polymerase II. Interacts with ERCC6/CSB (via CIM motif); promoting recruitment to lesion-stalled RNA polymerase II (Pol II). Interacts with KIAA1530/UVSSA. Interacts with a subunit of RNA polymerase II TFIIH.

The protein localises to the nucleus. It is found in the chromosome. It localises to the nucleus matrix. The protein operates within protein modification; protein ubiquitination. Functionally, substrate-recognition component of the CSA complex, a DCX (DDB1-CUL4-X-box) E3 ubiquitin-protein ligase complex, involved in transcription-coupled nucleotide excision repair (TC-NER), a process during which RNA polymerase II-blocking lesions are rapidly removed from the transcribed strand of active genes. Following recruitment to lesion-stalled RNA polymerase II (Pol II), the CSA complex mediates ubiquitination of Pol II subunit POLR2A/RPB1 at 'Lys-1268', a critical TC-NER checkpoint, governing RNA Pol II stability and initiating DNA damage excision by TFIIH recruitment. The CSA complex also promotes the ubiquitination and subsequent proteasomal degradation of ERCC6/CSB in a UV-dependent manner; ERCC6 degradation is essential for the recovery of RNA synthesis after transcription-coupled repair. Also plays a role in DNA double-strand breaks (DSSBs) repair by non-homologous end joining (NHEJ). The polypeptide is DNA excision repair protein ERCC-8 (Mus musculus (Mouse)).